The following is a 1444-amino-acid chain: ABC transporter G family member 39 (1444 aa).

The tract at residues 1-36 is disordered; sequence MDIVRMGSVASGGGSVRRTASSWRGTSGRSDAFGRS. Positions 19 to 29 are enriched in polar residues; it reads TASSWRGTSGR. An ABC transporter 1 domain is found at 154–426; the sequence is LSAMRIVSSG…FEAMGFKCPE (273 aa). 187–194 contacts ATP; sequence GPPGSGKT. The region spanning 504 to 717 is the ABC transmembrane type-2 1 domain; the sequence is ELTKACFSRE…AQNAIAVNEF (214 aa). 6 helical membrane passes run 522-542, 555-575, 610-630, 642-662, 667-687, and 754-774; these read FVYI…MTVF, GAIF…NGFA, IPIS…VMGF, VLLV…AALG, VADT…GFLI, and IGVG…ILFL. One can recognise an ABC transporter 2 domain in the interval 846–1098; it reads ITFDNIRYSV…HLINYFEGIQ (253 aa). Position 891-898 (891-898) interacts with ATP; that stretch reads GVSGAGKT. The region spanning 1171 to 1385 is the ABC transmembrane type-2 2 domain; it reads TQCMACLWKQ…TLYGLVASQY (215 aa). The next 7 membrane-spanning stretches (helical) occupy residues 1192–1212, 1220–1240, 1278–1298, 1305–1325, 1335–1355, 1362–1382, and 1414–1434; these read ATRI…FLNL, LDLF…GIQN, IPHI…LIGF, FFWY…YGMM, IAAI…GFLI, IWWR…GLVA, and LGYV…VFAF.

It belongs to the ABC transporter superfamily. ABCG family. PDR (TC 3.A.1.205) subfamily.

It is found in the membrane. Its function is as follows. May be a general defense protein. The sequence is that of ABC transporter G family member 39 from Oryza sativa subsp. japonica (Rice).